Reading from the N-terminus, the 160-residue chain is Putative transcriptional regulator protein YobU (160 aa).

The chain is Putative transcriptional regulator protein YobU (yobU) from Bacillus subtilis (strain 168).